A 369-amino-acid chain; its full sequence is 3-isopropylmalate dehydrogenase (369 aa).

Residue 76–89 (GPKWDRNPSHLRPE) participates in NAD(+) binding. Residues R96, R106, R134, and D223 each coordinate substrate. Residues D223, D247, and D251 each coordinate Mg(2+). 281–293 (GSAPDIAGQNKAN) lines the NAD(+) pocket.

Belongs to the isocitrate and isopropylmalate dehydrogenases family. LeuB type 1 subfamily. Homodimer. The cofactor is Mg(2+). It depends on Mn(2+) as a cofactor.

The protein localises to the cytoplasm. It catalyses the reaction (2R,3S)-3-isopropylmalate + NAD(+) = 4-methyl-2-oxopentanoate + CO2 + NADH. Its pathway is amino-acid biosynthesis; L-leucine biosynthesis; L-leucine from 3-methyl-2-oxobutanoate: step 3/4. Functionally, catalyzes the oxidation of 3-carboxy-2-hydroxy-4-methylpentanoate (3-isopropylmalate) to 3-carboxy-4-methyl-2-oxopentanoate. The product decarboxylates to 4-methyl-2 oxopentanoate. The protein is 3-isopropylmalate dehydrogenase (leuB) of Priestia megaterium (strain DSM 319 / IMG 1521) (Bacillus megaterium).